Here is a 29-residue protein sequence, read N- to C-terminus: uncharacterized protein (29 aa).

This is an uncharacterized protein from Haloarcula hispanica (His1V).